The sequence spans 130 residues: L-ectoine synthase (130 aa).

The protein belongs to the ectoine synthase family.

The enzyme catalyses (2S)-4-acetamido-2-aminobutanoate = L-ectoine + H2O. It participates in amine and polyamine biosynthesis; ectoine biosynthesis; L-ectoine from L-aspartate 4-semialdehyde: step 3/3. In terms of biological role, catalyzes the circularization of gamma-N-acetyl-alpha,gamma-diaminobutyric acid (ADABA) to ectoine (1,4,5,6-tetrahydro-2-methyl-4-pyrimidine carboxylic acid), which is an excellent osmoprotectant. This Mycolicibacterium gilvum (strain PYR-GCK) (Mycobacterium gilvum (strain PYR-GCK)) protein is L-ectoine synthase.